The chain runs to 254 residues: 3-deoxy-manno-octulosonate cytidylyltransferase (254 aa).

This sequence belongs to the KdsB family.

The protein localises to the cytoplasm. The enzyme catalyses 3-deoxy-alpha-D-manno-oct-2-ulosonate + CTP = CMP-3-deoxy-beta-D-manno-octulosonate + diphosphate. Its pathway is nucleotide-sugar biosynthesis; CMP-3-deoxy-D-manno-octulosonate biosynthesis; CMP-3-deoxy-D-manno-octulosonate from 3-deoxy-D-manno-octulosonate and CTP: step 1/1. The protein operates within bacterial outer membrane biogenesis; lipopolysaccharide biosynthesis. In terms of biological role, activates KDO (a required 8-carbon sugar) for incorporation into bacterial lipopolysaccharide in Gram-negative bacteria. This chain is 3-deoxy-manno-octulosonate cytidylyltransferase, found in Haemophilus influenzae (strain PittGG).